The chain runs to 299 residues: N-acetylmuramic acid 6-phosphate etherase (299 aa).

The 164-residue stretch at 55–218 (CINCLEKNGR…STTVMVKMGK (164 aa)) folds into the SIS domain. Glu83 (proton donor) is an active-site residue. The active site involves Glu114.

The protein belongs to the GCKR-like family. MurNAc-6-P etherase subfamily. As to quaternary structure, homodimer.

The catalysed reaction is N-acetyl-D-muramate 6-phosphate + H2O = N-acetyl-D-glucosamine 6-phosphate + (R)-lactate. It functions in the pathway amino-sugar metabolism; N-acetylmuramate degradation. Its function is as follows. Specifically catalyzes the cleavage of the D-lactyl ether substituent of MurNAc 6-phosphate, producing GlcNAc 6-phosphate and D-lactate. The polypeptide is N-acetylmuramic acid 6-phosphate etherase (Pseudothermotoga lettingae (strain ATCC BAA-301 / DSM 14385 / NBRC 107922 / TMO) (Thermotoga lettingae)).